The primary structure comprises 186 residues: Putative manganese efflux pump MntP (186 aa).

Transmembrane regions (helical) follow at residues 3–23 (PIAL…AAIG), 39–59 (IGII…LIGK), 65–85 (VEAW…LHMI), 109–129 (CLTA…LAFI), 133–153 (IWIA…IGIM), and 166–186 (AEIF…YGQL).

This sequence belongs to the MntP (TC 9.B.29) family.

The protein resides in the cell inner membrane. In terms of biological role, probably functions as a manganese efflux pump. The protein is Putative manganese efflux pump MntP of Alcanivorax borkumensis (strain ATCC 700651 / DSM 11573 / NCIMB 13689 / SK2).